The primary structure comprises 258 residues: Synaptosomal-associated protein 29 (258 aa).

Positions 1–41 (MSAYPKSYNPFDDDGEDEGARPAPWRDARDLPDGPDAPADR) are disordered. Basic and acidic residues predominate over residues 18–32 (EGARPAPWRDARDLP). Positions 76-107 (ASSEELARQRGVLERTEKMVDKMDQDLKISQK) form a coiled coil. Ser77, Ser78, and Ser114 each carry phosphoserine. The interval 127-190 (PVETPPEQNG…GSAVSTDAYP (64 aa)) is disordered. 2 positions are modified to phosphothreonine: Thr130 and Thr137. Over residues 132–144 (PEQNGTLASQPNS) the composition is skewed to polar residues. A phosphoserine mark is found at Ser163, Ser182, Ser185, Ser204, and Ser210. Residues 196-258 (QAYHQKIDSN…KSTERKVRQL (63 aa)) form the t-SNARE coiled-coil homology domain.

This sequence belongs to the SNAP-25 family. Forms a SNARE complex, composed of VAMP8, SNAP29 and STX17, involved in fusion of autophagosome with lysosome. Interacts with multiple syntaxins including STX6. Interacts with EIPR1. Interacts with STX17; this interaction is increased in the absence of TMEM39A.

The protein localises to the cytoplasm. The protein resides in the golgi apparatus membrane. It is found in the cytoplasmic vesicle. Its subcellular location is the autophagosome membrane. It localises to the cell projection. The protein localises to the cilium membrane. Its function is as follows. SNAREs, soluble N-ethylmaleimide-sensitive factor-attachment protein receptors, are essential proteins for fusion of cellular membranes. SNAREs localized on opposing membranes assemble to form a trans-SNARE complex, an extended, parallel four alpha-helical bundle that drives membrane fusion. SNAP29 is a SNARE involved in autophagy through the direct control of autophagosome membrane fusion with the lysososome membrane. Also plays a role in ciliogenesis by regulating membrane fusions. The polypeptide is Synaptosomal-associated protein 29 (Pongo abelii (Sumatran orangutan)).